The following is a 93-amino-acid chain: DNA-directed RNA polymerase subunit omega (93 aa).

Belongs to the RNA polymerase subunit omega family. In terms of assembly, the RNAP catalytic core consists of 2 alpha, 1 beta, 1 beta' and 1 omega subunit. When a sigma factor is associated with the core the holoenzyme is formed, which can initiate transcription.

The catalysed reaction is RNA(n) + a ribonucleoside 5'-triphosphate = RNA(n+1) + diphosphate. Functionally, promotes RNA polymerase assembly. Latches the N- and C-terminal regions of the beta' subunit thereby facilitating its interaction with the beta and alpha subunits. This Actinobacillus pleuropneumoniae serotype 3 (strain JL03) protein is DNA-directed RNA polymerase subunit omega.